The chain runs to 296 residues: MGFVKVVKNKAYFKRYQVKFRRRREGKTDYYARKRLVIQDKNKYNTPKYRMIVRVTNRDIICQIAYARIEGDMIVCAAYAHELPKYGIKVGLTNYAAAYCTGLLLARRLLNKFGLDKVYEGQVEVTGDEYNVESIDGEPGAFTCYLDAGLTRTTTGNKVFGALKGAVDGGLSIPHSTKRFPGYDSESKEFNPEVHRKHIFAQNVAEYMRLLMEEDEDAYKKQFSQYIKNGVTADQVEDLYKKAHAGIRENPVHEKKPKKEVKKKRWNRAKLSLEQKKDRVAQKKASFLRAQEKADS.

Positions 251–296 (PVHEKKPKKEVKKKRWNRAKLSLEQKKDRVAQKKASFLRAQEKADS) are disordered. Over residues 255–268 (KKPKKEVKKKRWNR) the composition is skewed to basic residues. Positions 271-281 (LSLEQKKDRVA) are enriched in basic and acidic residues.

Belongs to the universal ribosomal protein uL18 family. As to quaternary structure, component of the large ribosomal subunit (LSU). Part of a LSU subcomplex, the 5S RNP which is composed of the 5S RNA, RPL5 and RPL11.

It localises to the cytoplasm. Its subcellular location is the nucleus. It is found in the nucleolus. Functionally, component of the ribosome, a large ribonucleoprotein complex responsible for the synthesis of proteins in the cell. The small ribosomal subunit (SSU) binds messenger RNAs (mRNAs) and translates the encoded message by selecting cognate aminoacyl-transfer RNA (tRNA) molecules. The large subunit (LSU) contains the ribosomal catalytic site termed the peptidyl transferase center (PTC), which catalyzes the formation of peptide bonds, thereby polymerizing the amino acids delivered by tRNAs into a polypeptide chain. The nascent polypeptides leave the ribosome through a tunnel in the LSU and interact with protein factors that function in enzymatic processing, targeting, and the membrane insertion of nascent chains at the exit of the ribosomal tunnel. As part of the 5S RNP/5S ribonucleoprotein particle it is an essential component of the LSU, required for its formation and the maturation of rRNAs. It also couples ribosome biogenesis to p53/TP53 activation. As part of the 5S RNP it accumulates in the nucleoplasm and inhibits MDM2, when ribosome biogenesis is perturbed, mediating the stabilization and the activation of TP53. The polypeptide is Large ribosomal subunit protein uL18A (rpl5-a) (Xenopus laevis (African clawed frog)).